We begin with the raw amino-acid sequence, 390 residues long: Lipoyl synthase, mitochondrial (390 aa).

The transit peptide at 1–19 (MPTLLRILRPPRSPFTRCL) directs the protein to the mitochondrion. A disordered region spans residues 23-48 (ATPSSSGSSSRSKFTESLETGPGLDD). [4Fe-4S] cluster contacts are provided by C98, C103, C109, C136, C140, C143, and S350. The Radical SAM core domain maps to 119–339 (AEGRSAATAT…KEVAENLGFL (221 aa)).

This sequence belongs to the radical SAM superfamily. Lipoyl synthase family. It depends on [4Fe-4S] cluster as a cofactor.

Its subcellular location is the mitochondrion. The catalysed reaction is [[Fe-S] cluster scaffold protein carrying a second [4Fe-4S](2+) cluster] + N(6)-octanoyl-L-lysyl-[protein] + 2 oxidized [2Fe-2S]-[ferredoxin] + 2 S-adenosyl-L-methionine + 4 H(+) = [[Fe-S] cluster scaffold protein] + N(6)-[(R)-dihydrolipoyl]-L-lysyl-[protein] + 4 Fe(3+) + 2 hydrogen sulfide + 2 5'-deoxyadenosine + 2 L-methionine + 2 reduced [2Fe-2S]-[ferredoxin]. It functions in the pathway protein modification; protein lipoylation via endogenous pathway; protein N(6)-(lipoyl)lysine from octanoyl-[acyl-carrier-protein]: step 2/2. Its function is as follows. Catalyzes the radical-mediated insertion of two sulfur atoms into the C-6 and C-8 positions of the octanoyl moiety bound to the lipoyl domains of lipoate-dependent enzymes, thereby converting the octanoylated domains into lipoylated derivatives. The polypeptide is Lipoyl synthase, mitochondrial (Laccaria bicolor (strain S238N-H82 / ATCC MYA-4686) (Bicoloured deceiver)).